The primary structure comprises 384 residues: Sialyltransferase-like protein 3 (384 aa).

The Cytoplasmic segment spans residues 1–5; sequence MKRRH. The helical; Signal-anchor for type II membrane protein transmembrane segment at 6 to 26 threads the bilayer; sequence WSHPSCGLLLLVAVFCLLLVF. Over 27–384 the chain is Lumenal; that stretch reads RCSQLRHSGD…FRLPPVSFYR (358 aa). A glycan (N-linked (GlcNAc...) asparagine) is linked at Asn-241.

The protein belongs to the glycosyltransferase 29 family.

The protein resides in the golgi apparatus membrane. Its function is as follows. Possesses sialyltransferase-like activity in vitro. Transfers sialic acid to the glycoprotein asialofetuin. The transferred sialic acid is linked to galactose of Gal-beta-1,3-GalNAc through alpha-2,6-linkage. In Oryza sativa subsp. indica (Rice), this protein is Sialyltransferase-like protein 3.